Reading from the N-terminus, the 318-residue chain is Lipoyl synthase (318 aa).

Positions 64, 69, 75, 90, 94, 97, and 304 each coordinate [4Fe-4S] cluster. The 218-residue stretch at 76 to 293 (FSGGTATFMI…AEEGYKMGFK (218 aa)) folds into the Radical SAM core domain.

It belongs to the radical SAM superfamily. Lipoyl synthase family. [4Fe-4S] cluster is required as a cofactor.

It is found in the cytoplasm. The catalysed reaction is [[Fe-S] cluster scaffold protein carrying a second [4Fe-4S](2+) cluster] + N(6)-octanoyl-L-lysyl-[protein] + 2 oxidized [2Fe-2S]-[ferredoxin] + 2 S-adenosyl-L-methionine + 4 H(+) = [[Fe-S] cluster scaffold protein] + N(6)-[(R)-dihydrolipoyl]-L-lysyl-[protein] + 4 Fe(3+) + 2 hydrogen sulfide + 2 5'-deoxyadenosine + 2 L-methionine + 2 reduced [2Fe-2S]-[ferredoxin]. It functions in the pathway protein modification; protein lipoylation via endogenous pathway; protein N(6)-(lipoyl)lysine from octanoyl-[acyl-carrier-protein]: step 2/2. Functionally, catalyzes the radical-mediated insertion of two sulfur atoms into the C-6 and C-8 positions of the octanoyl moiety bound to the lipoyl domains of lipoate-dependent enzymes, thereby converting the octanoylated domains into lipoylated derivatives. This Pseudomonas syringae pv. tomato (strain ATCC BAA-871 / DC3000) protein is Lipoyl synthase.